We begin with the raw amino-acid sequence, 919 residues long: Kinesin-like protein KIN-UA (919 aa).

A disordered region spans residues 1–68 (MSTTSGTGGV…SGGGGDAGVP (68 aa)). Residues 15 to 51 (GTQRSSLRTQSSASTSSGGQKASVKSKSVLRKSSPAA) are compositionally biased toward low complexity. Positions 52–66 (LGGGSSKSGGGGDAG) are enriched in gly residues. Positions 70 to 412 (RVRVAVRLRP…IMFGQRAMKV (343 aa)) constitute a Kinesin motor domain. 155–162 (GQTGTGKT) serves as a coordination point for ATP. The disordered stretch occupies residues 286–305 (TRDGLSSESNGNSHMTKSLK). Residues 291 to 301 (SSESNGNSHMT) show a composition bias toward polar residues. Positions 382–390 (RTSLVITIG) match the D-BOX motif. 2 coiled-coil regions span residues 428 to 492 (SRRL…SIKK) and 530 to 621 (ALEE…LEQH). ARM repeat units lie at residues 650 to 689 (KPPVARLFEQVGLQKILSLLEAEDADVRIHAVKVVANLAA), 691 to 731 (EANQ…NLAM), 733 to 773 (ETNQ…NLCG), and 775 to 814 (DKLQTKLRSEGGIAALLGMVRCGHPDVLAQVARGIANFAK).

Belongs to the TRAFAC class myosin-kinesin ATPase superfamily. Kinesin family. Ungrouped subfamily. Interacts (via C-terminus) with NEK5. As to expression, expressed in leaves, guard cells, trichomes, vascular tissues, stele of the root tip region and columella cells. Highest expression detected in guard cells.

The protein resides in the cytoplasm. The protein localises to the cytoskeleton. This is Kinesin-like protein KIN-UA from Arabidopsis thaliana (Mouse-ear cress).